A 189-amino-acid polypeptide reads, in one-letter code: UPF0301 protein PSPA7_0505 (189 aa).

The protein belongs to the UPF0301 (AlgH) family.

This is UPF0301 protein PSPA7_0505 from Pseudomonas paraeruginosa (strain DSM 24068 / PA7) (Pseudomonas aeruginosa (strain PA7)).